The sequence spans 246 residues: Large ribosomal subunit protein uL3 (246 aa).

Disordered stretches follow at residues 140-162 and 214-246; these read SHRSIGSTGGRQDPGKTFKNKKM and ADVPLPGKFRENGSAGASQIEAAPEAPASEENA. Glutamine 151 bears the N5-methylglutamine mark. Residues 234–246 are compositionally biased toward low complexity; that stretch reads EAAPEAPASEENA.

This sequence belongs to the universal ribosomal protein uL3 family. As to quaternary structure, part of the 50S ribosomal subunit. Forms a cluster with proteins L14 and L19. Post-translationally, methylated by PrmB.

One of the primary rRNA binding proteins, it binds directly near the 3'-end of the 23S rRNA, where it nucleates assembly of the 50S subunit. The chain is Large ribosomal subunit protein uL3 from Methylorubrum extorquens (strain CM4 / NCIMB 13688) (Methylobacterium extorquens).